A 387-amino-acid polypeptide reads, in one-letter code: MATTKSFLILIVMILATTSSTFASLEEMVTVLSIDGGGIKGIIPGTILEFLEGQLQKMDNNADARLADYFDVIGGTSTGGLLTSMITTPNENNRPFAAANEIVPFFFEHGPHIFNSSTGQFFGPKYDGKYLMQVLQENLGETRVHQALTEVAISSLDIKTNKPVIFTKSNLAKSPELDAKMYDICYSTAAAPTYFPPHYFTTNTINGDKYEFNLVDGAVATVADPALLSISVATRLAEKDPAFASIRSLNYKKMLLLSLGTGTTSEFDKTYTAEETAKWGAIQWMLVIQRMTDAASSYMTDYYLSTVFQAQNSQKNYLRVQENALTGTTTEMDDASEANMESLVQVGENLLKKPVSKDNPETYEEALKRFAKLLSDRKKLRANKASY.

The N-terminal stretch at 1–23 (MATTKSFLILIVMILATTSSTFA) is a signal peptide. The PNPLA domain maps to 32-230 (LSIDGGGIKG…TVADPALLSI (199 aa)). The short motif at 36–41 (GGGIKG) is the GXGXXG element. Residues 75 to 79 (GTSTG) carry the GXSXG motif. Ser77 (nucleophile) is an active-site residue. An N-linked (GlcNAc...) asparagine glycan is attached at Asn115. Catalysis depends on Asp216, which acts as the Proton acceptor. Residues 216–218 (DGA) carry the DGA/G motif. Positions 361–385 (ETYEEALKRFAKLLSDRKKLRANKA) form a coiled coil.

This sequence belongs to the patatin family. As to expression, tuber.

It localises to the vacuole. Its function is as follows. Probable lipolytic acyl hydrolase (LAH), an activity which is thought to be involved in the response of tubers to pathogens. This chain is Patatin group D-3, found in Solanum tuberosum (Potato).